The chain runs to 561 residues: Tectonic-like complex member MKS1 (561 aa).

The C2 B9-type domain maps to 314 to 442 (LRLFVNGEVV…TASTWRPMEL (129 aa)).

In terms of assembly, part of the tectonic-like complex (also named B9 complex). Interacts with TMEM107. Interacts with TCTN3, AHI1, TCTN1, TCTN2, CC2D2A. Interacts with FLNA. Interacts with TMEM67. Interacts with B9D1 and B9D2.

The protein localises to the cytoplasm. Its subcellular location is the cytoskeleton. The protein resides in the cilium basal body. It is found in the microtubule organizing center. It localises to the centrosome. In terms of biological role, component of the tectonic-like complex, a complex localized at the transition zone of primary cilia and acting as a barrier that prevents diffusion of transmembrane proteins between the cilia and plasma membranes. Involved in centrosome migration to the apical cell surface during early ciliogenesis. Required for ciliary structure and function, including a role in regulating length and appropriate number through modulating centrosome duplication. Required for cell branching morphology. The polypeptide is Tectonic-like complex member MKS1 (Mks1) (Rattus norvegicus (Rat)).